The following is a 97-amino-acid chain: UPF0147 protein MA_0092 (97 aa).

The protein belongs to the UPF0147 family.

The chain is UPF0147 protein MA_0092 from Methanosarcina acetivorans (strain ATCC 35395 / DSM 2834 / JCM 12185 / C2A).